Reading from the N-terminus, the 149-residue chain is MSLVTEFKEFALKGNVMDLAVGVIIGGAFSTIVNSVVKDLIMPVVGVATGGLDFSNKFILLGHIPPNFKGNPDSYKDLQTAGVAAFGYGSFITVAINFVILALIIFMMVKFINKLRAPAPAEAAAPPPTPEDVLLLREIRDSLKNSPRV.

3 helical membrane passes run valine 16–valine 36, leucine 40–leucine 60, and glycine 89–valine 109.

Belongs to the MscL family. Homopentamer.

Its subcellular location is the cell inner membrane. In terms of biological role, channel that opens in response to stretch forces in the membrane lipid bilayer. May participate in the regulation of osmotic pressure changes within the cell. The protein is Large-conductance mechanosensitive channel of Paraburkholderia phymatum (strain DSM 17167 / CIP 108236 / LMG 21445 / STM815) (Burkholderia phymatum).